We begin with the raw amino-acid sequence, 275 residues long: Transmembrane protein 45B (275 aa).

The next 7 helical transmembrane spans lie at 7 to 27 (HALP…KYPL), 47 to 67 (IVEA…EQFV), 94 to 114 (LFFA…HVPL), 116 to 136 (VDRL…YYHV), 146 to 166 (IHSL…LEVI), 180 to 200 (LIIL…PPFG), and 212 to 232 (LMFI…IVAV). 2 positions are modified to phosphoserine: S270 and S272.

This sequence belongs to the TMEM45 family. As to quaternary structure, (Microbial infection) Interacts with sindbis virus nsP1 and nsP4; these interactions lead to viral RNA replication inhibition. (Microbial infection) Interacts with chikungunya virus nsP1 and nsP4; these interactions lead to viral RNA replication inhibition.

Its subcellular location is the endosome membrane. The protein resides in the lysosome membrane. The protein localises to the golgi apparatus. It is found in the trans-Golgi network membrane. Its function is as follows. Plays a role in innate immunity. Mechanistically, promotes alphaviruses RNA degradation by interacting with the viral polymerase nsP4 and the mRNA-capping enzyme nsP1 and thereby interfering with the interaction between viral RNA and nsP1. This is Transmembrane protein 45B (TMEM45B) from Homo sapiens (Human).